The chain runs to 285 residues: NADPH-dependent 7-cyano-7-deazaguanine reductase (285 aa).

91–93 (IES) lines the substrate pocket. An NADPH-binding site is contributed by 93-94 (SK). The active-site Thioimide intermediate is the C191. Catalysis depends on D198, which acts as the Proton donor. A substrate-binding site is contributed by 230–231 (HE). 259-260 (RG) is an NADPH binding site.

It belongs to the GTP cyclohydrolase I family. QueF type 2 subfamily. Homodimer.

It is found in the cytoplasm. The enzyme catalyses 7-aminomethyl-7-carbaguanine + 2 NADP(+) = 7-cyano-7-deazaguanine + 2 NADPH + 3 H(+). The protein operates within tRNA modification; tRNA-queuosine biosynthesis. Functionally, catalyzes the NADPH-dependent reduction of 7-cyano-7-deazaguanine (preQ0) to 7-aminomethyl-7-deazaguanine (preQ1). This Legionella pneumophila (strain Corby) protein is NADPH-dependent 7-cyano-7-deazaguanine reductase.